Reading from the N-terminus, the 344-residue chain is GTPase Obg (344 aa).

Residues 1 to 12 (MFVDSASFSVSS) are compositionally biased toward polar residues. Positions 1-36 (MFVDSASFSVSSGKGGPGCASFRREKHVPLGGPDGG) are disordered. Positions 1-158 (MFVDSASFSV…RNIRLELKLI (158 aa)) constitute an Obg domain. Positions 159–341 (ADVGLVGFPN…LKFGLLEILK (183 aa)) constitute an OBG-type G domain. GTP contacts are provided by residues 165–172 (GFPNVGKS), 190–194 (FTTLT), 212–215 (DIPG), 280–283 (TRLD), and 322–324 (SSV). Mg(2+)-binding residues include Ser172 and Thr192.

It belongs to the TRAFAC class OBG-HflX-like GTPase superfamily. OBG GTPase family. As to quaternary structure, monomer. The cofactor is Mg(2+).

The protein localises to the cytoplasm. Its function is as follows. An essential GTPase which binds GTP, GDP and possibly (p)ppGpp with moderate affinity, with high nucleotide exchange rates and a fairly low GTP hydrolysis rate. Plays a role in control of the cell cycle, stress response, ribosome biogenesis and in those bacteria that undergo differentiation, in morphogenesis control. The polypeptide is GTPase Obg (Campylobacter fetus subsp. fetus (strain 82-40)).